The following is a 334-amino-acid chain: F420-dependent glucose-6-phosphate dehydrogenase (334 aa).

A coenzyme F420-(gamma-Glu)n-binding site is contributed by D38. The Proton donor role is filled by H39. Residues T75 and 106–107 (TG) contribute to the coenzyme F420-(gamma-Glu)n site. The active-site Proton acceptor is the E108. Coenzyme F420-(gamma-Glu)n contacts are provided by residues N111, 175 to 176 (GG), and 178 to 179 (LV). Substrate-binding residues include T193, K196, K257, and R281.

The protein belongs to the F420-dependent glucose-6-phosphate dehydrogenase family. As to quaternary structure, homodimer.

The catalysed reaction is oxidized coenzyme F420-(gamma-L-Glu)(n) + D-glucose 6-phosphate + H(+) = 6-phospho-D-glucono-1,5-lactone + reduced coenzyme F420-(gamma-L-Glu)(n). Its function is as follows. Catalyzes the coenzyme F420-dependent oxidation of glucose 6-phosphate (G6P) to 6-phosphogluconolactone. This Kribbella flavida (strain DSM 17836 / JCM 10339 / NBRC 14399) protein is F420-dependent glucose-6-phosphate dehydrogenase.